We begin with the raw amino-acid sequence, 231 residues long: 2-amino-5-formylamino-6-ribosylaminopyrimidin-4(3H)-one 5'-monophosphate deformylase (231 aa).

Fe cation-binding residues include E29, H31, D40, and H110.

It belongs to the creatininase superfamily. FAPy deformylase family. As to quaternary structure, homodimer. Fe(2+) is required as a cofactor. Zn(2+) serves as cofactor.

The enzyme catalyses 2-amino-5-formylamino-6-(5-phospho-D-ribosylamino)pyrimidin-4(3H)-one + H2O = 2,5-diamino-6-(1-D-ribosylamino)pyrimidin-4(3H)-one 5'-phosphate + formate + H(+). It functions in the pathway cofactor biosynthesis; coenzyme F420 biosynthesis. Its pathway is cofactor biosynthesis; riboflavin biosynthesis. Catalyzes the hydrolysis of the formamide of 2-amino-5-formylamino-6-ribosylamino-4(3H)-pyrimidinone 5'-monophosphate (FAPy) to form 2,5-diamino-6-ribosylamino-4(3H)-pyrimidinone 5'-phosphate (APy). The polypeptide is 2-amino-5-formylamino-6-ribosylaminopyrimidin-4(3H)-one 5'-monophosphate deformylase (Methanothermobacter marburgensis (strain ATCC BAA-927 / DSM 2133 / JCM 14651 / NBRC 100331 / OCM 82 / Marburg) (Methanobacterium thermoautotrophicum)).